Reading from the N-terminus, the 96-residue chain is Protein S100-A10 (96 aa).

The tract at residues 62-73 (DDCRKGQVNFRS) is ancestral calcium site.

It belongs to the S-100 family. In terms of assembly, tetramer of 2 light chains (p10) and 2 heavy chains (annexin II).

Functionally, because p10 induces the dimerization of annexin II (p36), it may function as a regulator of protein phosphorylation in that the p36 monomer is the preferred target (in vitro) of tyrosine-specific kinase. This Xenopus laevis (African clawed frog) protein is Protein S100-A10 (s100a10).